The following is a 540-amino-acid chain: ATP-dependent RNA helicase DBP3 (540 aa).

Residues 1 to 35 (MTVEESKKRKLTDDVAIKQNEKKIKKDKKVKDKKD) show a composition bias toward basic and acidic residues. A disordered region spans residues 1–89 (MTVEESKKRK…TTEQPSKQVK (89 aa)). Residues 36-52 (KKDKKDKKDKKEKKEKK) show a composition bias toward basic residues. Composition is skewed to basic and acidic residues over residues 53–62 (EKKEKNDKKD) and 68–79 (DKKAEQVDKLSE). The short motif at 130–156 (LAFNQISLDKEVQNEIAKFPKPTPIQA) is the Q motif element. A Helicase ATP-binding domain is found at 159-332 (WPYLLSGKDV…STFMKEPVKV (174 aa)). Position 172–179 (172–179 (AETGSGKT)) interacts with ATP. Positions 279 to 282 (DEAD) match the DEAD box motif. The 150-residue stretch at 361–510 (KLLDLLKKYQ…PVPEDLIKFG (150 aa)) folds into the Helicase C-terminal domain.

This sequence belongs to the DEAD box helicase family. DDX5/DBP2 subfamily.

The protein localises to the nucleus. It is found in the nucleolus. It catalyses the reaction ATP + H2O = ADP + phosphate + H(+). In terms of biological role, ATP-dependent RNA helicase required for 60S ribosomal subunit synthesis. Involved in efficient pre-rRNA processing, predominantly at site A3, which is necessary for the normal formation of 25S and 5.8S rRNAs. The sequence is that of ATP-dependent RNA helicase DBP3 (DBP3) from Candida glabrata (strain ATCC 2001 / BCRC 20586 / JCM 3761 / NBRC 0622 / NRRL Y-65 / CBS 138) (Yeast).